The following is a 101-amino-acid chain: Small ribosomal subunit protein uS14 (101 aa).

Belongs to the universal ribosomal protein uS14 family. Part of the 30S ribosomal subunit. Contacts proteins S3 and S10.

In terms of biological role, binds 16S rRNA, required for the assembly of 30S particles and may also be responsible for determining the conformation of the 16S rRNA at the A site. The protein is Small ribosomal subunit protein uS14 of Baumannia cicadellinicola subsp. Homalodisca coagulata.